Reading from the N-terminus, the 323-residue chain is Arginase (323 aa).

His119, Asp142, His144, and Asp146 together coordinate Mn(2+). Substrate contacts are provided by residues 144–148 (HADIN), 155–157 (SKN), and Asp198. Residues Asp247 and Asp249 each coordinate Mn(2+). Residues Thr261 and Glu292 each coordinate substrate.

The protein belongs to the arginase family. As to quaternary structure, homotrimer. It depends on Mn(2+) as a cofactor.

The catalysed reaction is L-arginine + H2O = urea + L-ornithine. The protein operates within nitrogen metabolism; urea cycle; L-ornithine and urea from L-arginine: step 1/1. The polypeptide is Arginase (aru1) (Schizosaccharomyces pombe (strain 972 / ATCC 24843) (Fission yeast)).